The chain runs to 2590 residues: DNA polymerase theta (2590 aa).

Residues methionine 1 to arginine 12 are compositionally biased toward basic residues. The tract at residues methionine 1–phenylalanine 33 is disordered. Residues glycine 16–serine 30 are compositionally biased toward low complexity. Residues glutamine 96 and alanine 115 to threonine 122 each bind ATP. The region spanning leucine 102–aspartate 286 is the Helicase ATP-binding domain. The helicase activity stretch occupies residues leucine 102–alanine 554. Residues aspartate 216–histidine 219 carry the DEAH box motif. A Helicase C-terminal domain is found at glycine 321–alanine 554. The segment at aspartate 847–methionine 894 is interaction with RAD51. Residue lysine 990 is modified to N6-acetyllysine. Positions lysine 1034–serine 1060 are disordered. A compositionally biased stretch (basic residues) spans arginine 1040 to arginine 1050. A phosphoserine; by PLK1 mark is found at serine 1289, serine 1482, serine 1486, serine 1488, serine 1493, serine 1555, and serine 1563. A disordered region spans residues serine 1594–glycine 1622. Positions leucine 1598 to lysine 1619 are enriched in basic and acidic residues. A phosphoserine; by PLK1 mark is found at serine 1628 and serine 1635. Threonine 1755 is modified (phosphothreonine; by PLK1). A disordered region spans residues proline 1777–serine 1797. The interval alanine 2097–glutamate 2584 is DNA polymerase activity. Loop stretches follow at residues lysine 2142–phenylalanine 2177 and glutamate 2257–proline 2322. The Mg(2+) site is built by aspartate 2330 and tyrosine 2331. Positions glutamine 2491 to isoleucine 2535 are loop 3. Aspartate 2540 is a Mg(2+) binding site.

This sequence belongs to the DNA polymerase type-A family. In terms of assembly, homomultimer; forms homodimers and homotetramers. Interacts with RAD51. Interacts with ORC2 and ORC4. Interacts with RHNO1; interaction takes place during mitosis and promotes POLQ recruitment to DNA damage sites. Interacts (when phosphorylated) with TOPBP1 (via BRCT domains 7 and 8); promoting POLQ recruitment to DNA damage sites. Mg(2+) is required as a cofactor. Phosphorylated by PLK1; promoting interaction with TOPBP1 and recruitment to DNA damage sites. As to expression, highly expressed in testis.

The protein resides in the nucleus. It is found in the chromosome. It carries out the reaction DNA(n) + a 2'-deoxyribonucleoside 5'-triphosphate = DNA(n+1) + diphosphate. It catalyses the reaction ATP + H2O = ADP + phosphate + H(+). Specifically inhibited by the antibiotic novobiocin. The polymerase activity is specifically inhibited by the small molecule ART558. Novobiocin and ART558 confer specific killing of BRCA1/2-deficient cells and synergize with the poly [ADP-ribose] polymerase (PARP) inhibitor olaparib. Functionally, low-fidelity DNA polymerase with a helicase activity that promotes microhomology-mediated end-joining (MMEJ), an alternative non-homologous end-joining (NHEJ) machinery required to repair double-strand breaks in DNA during mitosis. MMEJ is an error-prone repair pathway that produces deletions of sequences from the strand being repaired and promotes genomic rearrangements, such as telomere fusions, some of them leading to cellular transformation. MMEJ is required during mitosis to repair persistent double-strand breaks that originate in S-phase. Although error-prone, MMEJ protects against chromosomal instability and tumorigenesis. The polymerase acts by binding directly the 2 ends of resected double-strand breaks, allowing microhomologous sequences in the overhangs to form base pairs. It then extends each strand from the base-paired region using the opposing overhang as a template. Requires partially resected DNA containing 2 to 6 base pairs of microhomology to perform MMEJ. The polymerase lacks proofreading activity and is highly promiscuous: unlike most polymerases, promotes extension of ssDNA and partial ssDNA (pssDNA) substrates. When the ends of a break do not contain terminal microhomology must identify embedded complementary sequences through a scanning step. Also acts as a DNA helicase, promoting dissociation of the replication protein A complex (RPA/RP-A), composed of RPA1, RPA2 and RPA3, from resected double-strand breaks to allow their annealing and subsequent joining by MMEJ. Removal of RPA/RP-A complex proteins prevents RAD51 accumulation at resected ends, thereby inhibiting homology-recombination repair (HR) pathway. Also shows RNA-directed DNA polymerase activity to mediate DNA repair in vitro; however this activity needs additional evidence in vivo. May also have lyase activity. Involved in somatic hypermutation of immunoglobulin genes, a process that requires the activity of DNA polymerases to ultimately introduce mutations at both A/T and C/G base pairs. POLQ-mediated end joining activity is involved in random integration of exogenous DNA hampers. The polypeptide is DNA polymerase theta (Homo sapiens (Human)).